Here is a 223-residue protein sequence, read N- to C-terminus: Acetate CoA-transferase subunit beta (223 aa).

Glutamate 46 is a catalytic residue.

This sequence belongs to the 3-oxoacid CoA-transferase subunit B family. In terms of assembly, heterotetramer composed of two alpha subunits (AtoD) and two beta subunits (AtoA).

It catalyses the reaction an acyl-CoA + acetate = a carboxylate + acetyl-CoA. The catalysed reaction is acetoacetate + acetyl-CoA = acetoacetyl-CoA + acetate. It functions in the pathway lipid metabolism; short-chain fatty acid metabolism. Coenzyme A transferase which is involved in short-chain fatty acid degradation and catalyzes the activation of short-chain fatty acids to their respective CoA thiolesters. This chain is Acetate CoA-transferase subunit beta (atoA), found in Haemophilus influenzae (strain ATCC 51907 / DSM 11121 / KW20 / Rd).